A 256-amino-acid chain; its full sequence is Thiazole synthase (256 aa).

Catalysis depends on K95, which acts as the Schiff-base intermediate with DXP. 1-deoxy-D-xylulose 5-phosphate-binding positions include G156, 182–183 (AG), and 204–205 (NT).

Belongs to the ThiG family. Homotetramer. Forms heterodimers with either ThiH or ThiS.

The protein localises to the cytoplasm. It carries out the reaction [ThiS sulfur-carrier protein]-C-terminal-Gly-aminoethanethioate + 2-iminoacetate + 1-deoxy-D-xylulose 5-phosphate = [ThiS sulfur-carrier protein]-C-terminal Gly-Gly + 2-[(2R,5Z)-2-carboxy-4-methylthiazol-5(2H)-ylidene]ethyl phosphate + 2 H2O + H(+). Its pathway is cofactor biosynthesis; thiamine diphosphate biosynthesis. Its function is as follows. Catalyzes the rearrangement of 1-deoxy-D-xylulose 5-phosphate (DXP) to produce the thiazole phosphate moiety of thiamine. Sulfur is provided by the thiocarboxylate moiety of the carrier protein ThiS. In vitro, sulfur can be provided by H(2)S. This is Thiazole synthase from Shigella flexneri.